A 442-amino-acid polypeptide reads, in one-letter code: D-inositol 3-phosphate glycosyltransferase (442 aa).

His15 contributes to the 1D-myo-inositol 3-phosphate binding site. Residues 21–22 and Gly29 contribute to the UDP-N-acetyl-alpha-D-glucosamine site; that span reads QP. 1D-myo-inositol 3-phosphate is bound by residues 26–31, Lys84, Tyr117, Thr141, and Arg161; that span reads DAGGMN. The UDP-N-acetyl-alpha-D-glucosamine site is built by Arg235, Lys240, and Gln299. Positions 308, 309, and 311 each coordinate Mg(2+). UDP-N-acetyl-alpha-D-glucosamine is bound by residues Glu321 and Glu329. Thr335 contributes to the Mg(2+) binding site.

It belongs to the glycosyltransferase group 1 family. MshA subfamily. As to quaternary structure, homodimer.

The catalysed reaction is 1D-myo-inositol 3-phosphate + UDP-N-acetyl-alpha-D-glucosamine = 1D-myo-inositol 2-acetamido-2-deoxy-alpha-D-glucopyranoside 3-phosphate + UDP + H(+). In terms of biological role, catalyzes the transfer of a N-acetyl-glucosamine moiety to 1D-myo-inositol 3-phosphate to produce 1D-myo-inositol 2-acetamido-2-deoxy-glucopyranoside 3-phosphate in the mycothiol biosynthesis pathway. This is D-inositol 3-phosphate glycosyltransferase from Rhodococcus erythropolis (strain PR4 / NBRC 100887).